A 307-amino-acid polypeptide reads, in one-letter code: Elongation factor Ts (307 aa).

Residues 80–83 (TDFV) are involved in Mg(2+) ion dislocation from EF-Tu.

Belongs to the EF-Ts family.

It localises to the cytoplasm. In terms of biological role, associates with the EF-Tu.GDP complex and induces the exchange of GDP to GTP. It remains bound to the aminoacyl-tRNA.EF-Tu.GTP complex up to the GTP hydrolysis stage on the ribosome. The chain is Elongation factor Ts from Nitrobacter hamburgensis (strain DSM 10229 / NCIMB 13809 / X14).